The primary structure comprises 434 residues: Methylenetetrahydrofolate--tRNA-(uracil-5-)-methyltransferase TrmFO (434 aa).

Position 10-15 (10-15 (GAGLAG)) interacts with FAD.

The protein belongs to the MnmG family. TrmFO subfamily. Requires FAD as cofactor.

Its subcellular location is the cytoplasm. It carries out the reaction uridine(54) in tRNA + (6R)-5,10-methylene-5,6,7,8-tetrahydrofolate + NADH + H(+) = 5-methyluridine(54) in tRNA + (6S)-5,6,7,8-tetrahydrofolate + NAD(+). It catalyses the reaction uridine(54) in tRNA + (6R)-5,10-methylene-5,6,7,8-tetrahydrofolate + NADPH + H(+) = 5-methyluridine(54) in tRNA + (6S)-5,6,7,8-tetrahydrofolate + NADP(+). Its function is as follows. Catalyzes the folate-dependent formation of 5-methyl-uridine at position 54 (M-5-U54) in all tRNAs. The sequence is that of Methylenetetrahydrofolate--tRNA-(uracil-5-)-methyltransferase TrmFO from Bacillus cereus (strain ATCC 10987 / NRS 248).